Reading from the N-terminus, the 282-residue chain is Heterogeneous nuclear ribonucleoprotein C (282 aa).

The region spanning 17-88 is the RRM domain; it reads SRVFIGNLNT…QVLDINLAAE (72 aa). 2 disordered regions span residues 131–177 and 208–282; these read APPP…RLKG and QSKQ…EEDS. The short motif at 141-147 is the Nuclear localization signal element; that stretch reads PSKRQRV. Over residues 161–172 the composition is skewed to low complexity; the sequence is SKSGQRGGSSKS. Positions 177 to 217 form a coiled coil; that stretch reads GDDLQAIKKELSQIKQRVDSLLENLERIERDQSKQDTKLDD. Basic and acidic residues-rich tracts occupy residues 208–217 and 224–235; these read QSKQDTKLDD and LKKEETGVKLIE. 2 stretches are compositionally biased toward acidic residues: residues 236–257 and 265–282; these read ETGD…EDTL and KETE…EEDS.

Belongs to the RRM HNRPC family. RALY subfamily. As to quaternary structure, tetramer.

It is found in the nucleus. In terms of biological role, binds pre-mRNA and nucleates the assembly of 40S hnRNP particles. Interacts with poly-U tracts in the 3'-UTR or 5'-UTR of mRNA and modulates the stability and the level of translation of bound mRNA molecules. Single HNRNPC tetramers bind 230-240 nucleotides. Trimers of HNRNPC tetramers bind 700 nucleotides. May play a role in the early steps of spliceosome assembly and pre-mRNA splicing. N6-methyladenosine (m6A) has been shown to alter the local structure in mRNAs and long non-coding RNAs (lncRNAs) via a mechanism named 'm(6)A-switch', facilitating binding of HNRNPC, leading to regulation of mRNA splicing. The protein is Heterogeneous nuclear ribonucleoprotein C (hnrnpc) of Xenopus laevis (African clawed frog).